Consider the following 254-residue polypeptide: MGPGLAASHVSFPDSLLAKMRDLLQYVACFFAFFSAGFLVVATWTDCWMVNADDSLEVSTKCRGLWWECVTNAFDGIRTCDEYDSILAEHSLKLVVTRALMITADILAGFGFITLLLGLDCVKFLPDEPYIKVRISFVAGTTLLIAGAPGIIGSVWYAVDVYVERSSLVLHNIFLGIQYKFGWSCWLGMAGSLGCFLAGAILTCCLYLFKDVGPERSYPYSTRKAYSTTAVSMPRSHAIPRTQTAKMYAVDTRV.

At 1–22 the chain is on the cytoplasmic side; the sequence is MGPGLAASHVSFPDSLLAKMRD. A helical membrane pass occupies residues 23–43; that stretch reads LLQYVACFFAFFSAGFLVVAT. At 44-98 the chain is on the extracellular side; it reads WTDCWMVNADDSLEVSTKCRGLWWECVTNAFDGIRTCDEYDSILAEHSLKLVVTR. Residues 99-119 form a helical membrane-spanning segment; the sequence is ALMITADILAGFGFITLLLGL. At 120-134 the chain is on the cytoplasmic side; the sequence is DCVKFLPDEPYIKVR. A helical membrane pass occupies residues 135 to 155; it reads ISFVAGTTLLIAGAPGIIGSV. Topologically, residues 156 to 188 are extracellular; it reads WYAVDVYVERSSLVLHNIFLGIQYKFGWSCWLG. The helical transmembrane segment at 189–209 threads the bilayer; sequence MAGSLGCFLAGAILTCCLYLF. The Cytoplasmic portion of the chain corresponds to 210–254; the sequence is KDVGPERSYPYSTRKAYSTTAVSMPRSHAIPRTQTAKMYAVDTRV. The short motif at 252–254 is the Interaction with TJP1 element; the sequence is TRV.

It belongs to the claudin family. In terms of assembly, can form heteropolymeric tight junction strands with other claudins. Interacts with CLDN19. Interacts (via PDZ-binding motif TRV) with TJP1 (via PDZ domain). Cannot form tight junction strands on its own. As to expression, expressed preferentially in kidney.

It is found in the cell junction. It localises to the tight junction. The protein localises to the cell membrane. It catalyses the reaction Mg(2+)(in) = Mg(2+)(out). The enzyme catalyses Ca(2+)(in) = Ca(2+)(out). It carries out the reaction Na(+)(in) = Na(+)(out). The catalysed reaction is K(+)(in) = K(+)(out). It catalyses the reaction Rb(+)(in) = Rb(+)(out). The enzyme catalyses Cs(+)(in) = Cs(+)(out). It carries out the reaction Li(+)(in) = Li(+)(out). In terms of biological role, forms paracellular channels: coassembles with CLDN19 into tight junction strands with cation-selective channels through the strands, conveying epithelial permeability in a process known as paracellular tight junction permeability. Involved in the maintenance of ion gradients along the nephron. In the thick ascending limb (TAL) of Henle's loop, facilitates sodium paracellular permeability from the interstitial compartment to the lumen, contributing to the lumen-positive transepithelial potential that drives paracellular magnesium and calcium reabsorption. The sequence is that of Claudin-16 (CLDN16) from Bos taurus (Bovine).